The primary structure comprises 517 residues: Crotonobetaine/carnitine--CoA ligase (517 aa).

The protein belongs to the ATP-dependent AMP-binding enzyme family.

It carries out the reaction 4-(trimethylamino)butanoate + ATP + CoA = 4-(trimethylamino)butanoyl-CoA + AMP + diphosphate. The enzyme catalyses crotonobetaine + ATP + CoA = crotonobetainyl-CoA + AMP + diphosphate. It catalyses the reaction (R)-carnitine + ATP + CoA = (R)-carnitinyl-CoA + AMP + diphosphate. It participates in amine and polyamine metabolism; carnitine metabolism. Its function is as follows. Catalyzes the transfer of CoA to carnitine, generating the initial carnitinyl-CoA needed for the CaiB reaction cycle. Also has activity toward crotonobetaine and gamma-butyrobetaine. The protein is Crotonobetaine/carnitine--CoA ligase of Escherichia coli (strain ATCC 8739 / DSM 1576 / NBRC 3972 / NCIMB 8545 / WDCM 00012 / Crooks).